The following is a 592-amino-acid chain: Aspartate--tRNA ligase (592 aa).

An L-aspartate-binding site is contributed by Glu173. Residues 197 to 200 (QLFK) are aspartate. Arg219 lines the L-aspartate pocket. Residues 219–221 (RDE) and Gln228 contribute to the ATP site. An L-aspartate-binding site is contributed by His448. Glu482 is an ATP binding site. Arg489 contacts L-aspartate. 534–537 (GLDR) contacts ATP.

The protein belongs to the class-II aminoacyl-tRNA synthetase family. Type 1 subfamily. Homodimer.

The protein resides in the cytoplasm. It catalyses the reaction tRNA(Asp) + L-aspartate + ATP = L-aspartyl-tRNA(Asp) + AMP + diphosphate. In terms of biological role, catalyzes the attachment of L-aspartate to tRNA(Asp) in a two-step reaction: L-aspartate is first activated by ATP to form Asp-AMP and then transferred to the acceptor end of tRNA(Asp). The chain is Aspartate--tRNA ligase from Shewanella putrefaciens (strain CN-32 / ATCC BAA-453).